We begin with the raw amino-acid sequence, 346 residues long: Protein PXR1 (346 aa).

Disordered stretches follow at residues 1 to 27 (MGLA…NTEN) and 146 to 315 (EDAE…QVSV). The segment covering 15–27 (DPNNTRWSRNTEN) has biased composition (polar residues). The G-patch domain maps to 25-79 (TENFGHRMLRSQGWEPGQYLGPQDASHAVYHTAASASHIKVALKEDNLGLGAKMN). The segment covering 215–230 (SKSKKSHKSKKEKKRR) has biased composition (basic residues). A compositionally biased stretch (acidic residues) spans 235–245 (ASDEQESEDEE). The segment covering 249-274 (KRRKKEKKERKERRREKREKKLKKKQ) has biased composition (basic residues). Residues 293–314 (GVDTGASTPVASGTSTPVSQVS) show a composition bias toward polar residues.

It belongs to the PINX1 family.

The protein localises to the nucleus. It is found in the nucleolus. Functionally, involved in rRNA-processing at A0, A1 and A2 sites and negatively regulates telomerase. The protein is Protein PXR1 (PXR1) of Pyricularia oryzae (strain 70-15 / ATCC MYA-4617 / FGSC 8958) (Rice blast fungus).